The primary structure comprises 100 residues: Urease subunit gamma (100 aa).

This sequence belongs to the urease gamma subunit family. In terms of assembly, heterotrimer of UreA (gamma), UreB (beta) and UreC (alpha) subunits. Three heterotrimers associate to form the active enzyme.

The protein localises to the cytoplasm. The catalysed reaction is urea + 2 H2O + H(+) = hydrogencarbonate + 2 NH4(+). It functions in the pathway nitrogen metabolism; urea degradation; CO(2) and NH(3) from urea (urease route): step 1/1. The sequence is that of Urease subunit gamma from Mycobacterium bovis (strain ATCC BAA-935 / AF2122/97).